Reading from the N-terminus, the 116-residue chain is uncharacterized protein (116 aa).

The tract at residues 77-116 (SATSHYPKADDPQRFARSVSRGPSRVRRPARNSASRPVRR) is disordered.

This is an uncharacterized protein from Frog virus 3 (isolate Goorha) (FV-3).